Reading from the N-terminus, the 629-residue chain is MSITLESAKEHANDLAVLCCRAEEGTVIGPSNLEDPAIFGDLEDSGLLTIPANCLKIGEVLGAKLVKTADSLTPLTPELLEGVNSISEEAPKQEASAPVEAPVAEVAPAAMPVANVTGSMLKIHIGEGKDINLEIPLTIAGQMGVVAPTAAAPAGVAMPVASATEQVVAPAGEPKLVRTLQKKHFKIEKVEFGPETKIENNTIYIRENICEDAVKVSNLVTDIKVEIITPADYGKYSETIMDVQPIATKEGDGKIGQGVTRVIDGAIIMVTGTDEDGVQIGEFGSSEGELDANIMWGRPGAPDKGEILIKTQVTIKAGTNMERPGPLAAHKATDFITQEIREALKKLDDSEVVETEELAQYRRPGKKKVVIIKEIMGQGAMHDNLILPVEPVGVIGAKPNVDLGNVPVVLSPLEVLDGGIHALTCIGPASKENSRHYWREPLVIEVMNDEEFDLAGVVFVGSPQVNAEKFYVSERLGMLVETMDVEGAFITTEGFGNNHIDFASHHEQVGMRGIPVVGMSFCAVQGALVVGNKYMKYMVDNNKSEQGIENEILSNNTLCPEDAIRAVAMLKAAIAEEEVKVAERKFNKNVKENNVDLIEEQAGKEITLLPNEQVLPMSKKRKEIYEADK.

The Covalent intermediate with substrate; via pyruvic acid role is filled by cysteine 425. Cysteine 425 is modified (pyruvic acid (Cys)).

In terms of assembly, consists of 3 subunits of 23, 26 and 45 kDa (alpha, gamma and beta respectively). The molecular weight of the complex is approximately 870 kDa, suggesting a decameric structure, if all 3 subunits are present in equal stoichiometry. Post-translationally, the peptide chain is cleaved into beta and alpha chains, and the alpha chain N-terminal cysteine is deaminated and oxidized to form a reactive pyruvoyl group.

Its subcellular location is the cytoplasm. It carries out the reaction [PrdC protein]-Se-L-selenocysteinyl-S-L-cysteine + 5-aminopentanoate = [PrdC protein]-L-selenocysteine/L-cysteine + D-proline. In terms of biological role, D-proline reductase catalyzes the reductive cleavage of a C-N bond in D-proline resulting in the formation of 5-aminovalerate. The alpha subunit has been shown to bind D-proline, presumably via the pyruvoyl group. The sequence is that of D-proline reductase proprotein PrdA (prdA) from Acetoanaerobium sticklandii (strain ATCC 12662 / DSM 519 / JCM 1433 / CCUG 9281 / NCIMB 10654 / HF) (Clostridium sticklandii).